Reading from the N-terminus, the 127-residue chain is Small ribosomal subunit protein bS6 (127 aa).

The interval 96–127 is disordered; it reads VTTPSPMMKEEKSRSLTPAAGDEGKPAEAAEA. Residues 117-127 show a composition bias toward basic and acidic residues; that stretch reads DEGKPAEAAEA.

Belongs to the bacterial ribosomal protein bS6 family.

Binds together with bS18 to 16S ribosomal RNA. This is Small ribosomal subunit protein bS6 from Azoarcus sp. (strain BH72).